Consider the following 473-residue polypeptide: Photosystem II CP43 reaction center protein (473 aa).

Residues 1–14 (MKTLYSLRRSYPVE) constitute a propeptide that is removed on maturation. Threonine 15 is subject to N-acetylthreonine. A Phosphothreonine modification is found at threonine 15. A run of 5 helical transmembrane segments spans residues 69–93 (LFEV…PHLA), 134–155 (LIGP…KDRN), 178–200 (KALY…RKIT), 255–275 (KPFA…LSYS), and 291–312 (WFNN…ASQA). Glutamate 367 provides a ligand contact to [CaMn4O5] cluster. Residues 447–471 (RARAAAAGFEKGIDRDFEPVLSMTP) traverse the membrane as a helical segment.

The protein belongs to the PsbB/PsbC family. PsbC subfamily. In terms of assembly, PSII is composed of 1 copy each of membrane proteins PsbA, PsbB, PsbC, PsbD, PsbE, PsbF, PsbH, PsbI, PsbJ, PsbK, PsbL, PsbM, PsbT, PsbX, PsbY, PsbZ, Psb30/Ycf12, at least 3 peripheral proteins of the oxygen-evolving complex and a large number of cofactors. It forms dimeric complexes. The cofactor is Binds multiple chlorophylls and provides some of the ligands for the Ca-4Mn-5O cluster of the oxygen-evolving complex. It may also provide a ligand for a Cl- that is required for oxygen evolution. PSII binds additional chlorophylls, carotenoids and specific lipids..

Its subcellular location is the plastid. It is found in the chloroplast thylakoid membrane. Its function is as follows. One of the components of the core complex of photosystem II (PSII). It binds chlorophyll and helps catalyze the primary light-induced photochemical processes of PSII. PSII is a light-driven water:plastoquinone oxidoreductase, using light energy to abstract electrons from H(2)O, generating O(2) and a proton gradient subsequently used for ATP formation. This Pinus thunbergii (Japanese black pine) protein is Photosystem II CP43 reaction center protein.